The chain runs to 157 residues: Protein Smg homolog (157 aa).

This sequence belongs to the Smg family.

This Shewanella loihica (strain ATCC BAA-1088 / PV-4) protein is Protein Smg homolog.